Reading from the N-terminus, the 70-residue chain is Conotoxin Mr3.8 (70 aa).

The N-terminal stretch at 1 to 24 (MLKMGVVLFIFLVLFPLATLQLDA) is a signal peptide. A propeptide spanning residues 25-54 (DQPVERYAKNKQLFNPHKRRGIILRAPGKR) is cleaved from the precursor. 3 cysteine pairs are disulfide-bonded: Cys-55/Cys-67, Cys-56/Cys-68, and Cys-61/Cys-65.

Belongs to the conotoxin M superfamily. Expressed by the venom duct.

It localises to the secreted. In terms of biological role, in vitro, inhibits proliferation of the mice ovarian cancer cells ID8. In Conus marmoreus (Marble cone), this protein is Conotoxin Mr3.8.